The chain runs to 175 residues: Putative adenylate cyclase MJ0240 (175 aa).

Positions 1 to 175 (MIEVEIKVKI…RKSYLELRGL (175 aa)) constitute a CYTH domain. Tyr-37 functions as the Proton acceptor in the catalytic mechanism.

It belongs to the adenylyl cyclase CyaB family.

The protein resides in the cytoplasm. It carries out the reaction ATP = 3',5'-cyclic AMP + diphosphate. Could catalyze the biosynthesis of cyclic AMP (cAMP) from ATP. This chain is Putative adenylate cyclase MJ0240, found in Methanocaldococcus jannaschii (strain ATCC 43067 / DSM 2661 / JAL-1 / JCM 10045 / NBRC 100440) (Methanococcus jannaschii).